Reading from the N-terminus, the 453-residue chain is CCA-adding enzyme (453 aa).

Serine 53 and lysine 56 together coordinate ATP. CTP is bound by residues serine 53 and lysine 56. Mg(2+) is bound by residues aspartate 65, aspartate 67, and aspartate 119. Positions 142, 161, and 170 each coordinate ATP. CTP contacts are provided by histidine 142, lysine 161, and tyrosine 170.

It belongs to the tRNA nucleotidyltransferase/poly(A) polymerase family. Archaeal CCA-adding enzyme subfamily. As to quaternary structure, homodimer. Requires Mg(2+) as cofactor.

It carries out the reaction a tRNA precursor + 2 CTP + ATP = a tRNA with a 3' CCA end + 3 diphosphate. It catalyses the reaction a tRNA with a 3' CCA end + 2 CTP + ATP = a tRNA with a 3' CCACCA end + 3 diphosphate. Its function is as follows. Catalyzes the addition and repair of the essential 3'-terminal CCA sequence in tRNAs without using a nucleic acid template. Adds these three nucleotides in the order of C, C, and A to the tRNA nucleotide-73, using CTP and ATP as substrates and producing inorganic pyrophosphate. tRNA 3'-terminal CCA addition is required both for tRNA processing and repair. Also involved in tRNA surveillance by mediating tandem CCA addition to generate a CCACCA at the 3' terminus of unstable tRNAs. While stable tRNAs receive only 3'-terminal CCA, unstable tRNAs are marked with CCACCA and rapidly degraded. The sequence is that of CCA-adding enzyme from Pyrococcus furiosus (strain ATCC 43587 / DSM 3638 / JCM 8422 / Vc1).